Here is a 74-residue protein sequence, read N- to C-terminus: DNA-directed RNA polymerase subunit omega (74 aa).

Belongs to the RNA polymerase subunit omega family. As to quaternary structure, the RNAP catalytic core consists of 2 alpha, 1 beta/beta' and 1 omega subunit. When a sigma factor is associated with the core the holoenzyme is formed, which can initiate transcription.

It catalyses the reaction RNA(n) + a ribonucleoside 5'-triphosphate = RNA(n+1) + diphosphate. Functionally, promotes RNA polymerase assembly. Latches the N- and C-terminal regions of the beta' subunit thereby facilitating its interaction with the beta and alpha subunits. The chain is DNA-directed RNA polymerase subunit omega from Helicobacter hepaticus (strain ATCC 51449 / 3B1).